A 166-amino-acid polypeptide reads, in one-letter code: Large ribosomal subunit protein uL10 (166 aa).

The protein belongs to the universal ribosomal protein uL10 family. Part of the ribosomal stalk of the 50S ribosomal subunit. The N-terminus interacts with L11 and the large rRNA to form the base of the stalk. The C-terminus forms an elongated spine to which L12 dimers bind in a sequential fashion forming a multimeric L10(L12)X complex.

Forms part of the ribosomal stalk, playing a central role in the interaction of the ribosome with GTP-bound translation factors. The polypeptide is Large ribosomal subunit protein uL10 (Pseudomonas fluorescens (strain Pf0-1)).